Reading from the N-terminus, the 92-residue chain is Small ribosomal subunit protein uS19c (92 aa).

Belongs to the universal ribosomal protein uS19 family.

It is found in the plastid. The protein localises to the chloroplast. Protein S19 forms a complex with S13 that binds strongly to the 16S ribosomal RNA. The chain is Small ribosomal subunit protein uS19c from Ostreococcus tauri.